The sequence spans 230 residues: MHTTQKDTTYTKIFVGGLPYHTTDSSLRKYFEVFGEIEEAVVITDRQTGKSRGYGFVTMADRSAADRACKDPNPIIDGRKANVNLAYLGAKPRVMQPGFTFGVPQIHPAFIQRPYGIPTHYVYPQAFMQPSVVIPHIQPTATSATASSPYIDYTGAAYAQYASAATAAAAAAYEQYPYAASPAATGYVAAAGYGYAMQQPLATAAPGSAAAAAAAFGQYQPQQLQAERMQ.

Residues 11 to 88 (TKIFVGGLPY…RKANVNLAYL (78 aa)) form the RRM domain.

The protein resides in the nucleus. The protein localises to the cytoplasm. In terms of biological role, multifunctional RNA-binding protein involved in the regulation of pre-mRNA splicing, mRNA stability and mRNA translation important for cell fate decision and differentiation. Plays a major role in pre-mRNA alternative splicing regulation. Mediates preferentially muscle-specific exon inclusion in numerous mRNAs important for striated cardiac and skeletal muscle cell differentiation. Binds to intronic splicing enhancer (ISE) composed of stretches of GU-rich motifs localized in flanking intron of exon that will be included by alternative splicing. Involved in embryonic stem cell (ESC) transition to cardiac cell differentiation by promoting pre-mRNA alternative splicing events of several pluripotency and/or differentiation genes. Plays a role in the regulation of mRNA stability and mRNA translation to which it is bound. Involved in myogenic differentiation by regulating myog levels. Binds to a huge amount of mRNAs. Required for embryonic heart development, sarcomer and M-band formation in striated muscles. In Danio rerio (Zebrafish), this protein is RNA-binding protein 24 (rbm24).